Reading from the N-terminus, the 68-residue chain is Glu S.griseus protease inhibitor (68 aa).

N-acetylserine is present on S1. An intrachain disulfide couples C3 to C48.

Belongs to the protease inhibitor I13 (potato type I serine protease inhibitor) family.

Functionally, competitively inhibits Glu S.griseus protease by forming probably a 1:1 complex. BGIA has no inhibitory activity against 2 other acidic amino acid-specific endopeptidases (S.aureus protease V8 and B.subtilis proteinase), chymotrypsin, trypsin, pancreatic elastase, and papain, although subtilisin Carlsberg was strongly inhibited. The polypeptide is Glu S.griseus protease inhibitor (Momordica charantia (Bitter gourd)).